A 404-amino-acid chain; its full sequence is Cysteine desulfurase IscS (404 aa).

Pyridoxal 5'-phosphate contacts are provided by residues 75–76, N155, Q183, and 203–205; these read AT and TGH. The residue at position 206 (K206) is an N6-(pyridoxal phosphate)lysine. Pyridoxal 5'-phosphate is bound at residue T243. The Cysteine persulfide intermediate role is filled by C328. [2Fe-2S] cluster is bound at residue C328.

It belongs to the class-V pyridoxal-phosphate-dependent aminotransferase family. NifS/IscS subfamily. As to quaternary structure, homodimer. Forms a heterotetramer with IscU, interacts with other sulfur acceptors. The cofactor is pyridoxal 5'-phosphate.

The protein localises to the cytoplasm. The enzyme catalyses (sulfur carrier)-H + L-cysteine = (sulfur carrier)-SH + L-alanine. It participates in cofactor biosynthesis; iron-sulfur cluster biosynthesis. Its function is as follows. Master enzyme that delivers sulfur to a number of partners involved in Fe-S cluster assembly, tRNA modification or cofactor biosynthesis. Catalyzes the removal of elemental sulfur atoms from cysteine to produce alanine. Functions as a sulfur delivery protein for Fe-S cluster synthesis onto IscU, an Fe-S scaffold assembly protein, as well as other S acceptor proteins. In Cronobacter sakazakii (strain ATCC BAA-894) (Enterobacter sakazakii), this protein is Cysteine desulfurase IscS.